The sequence spans 607 residues: Rap1 GTPase-GDP dissociation stimulator 1 (607 aa).

The short motif at 4–13 (LSDTLKKLKI) is the Nuclear export signal (NES) element. 2 ARM repeats span residues 89–131 (GLIS…DQAG) and 170–211 (DSLQ…NLAE). The segment at 122 to 170 (EGRSAVDQAGGAQIVIDHLRSLCSITDPANEKLLTVFCGMLMNYSNEND) is prevents binding to prenylated RHOA. Residue lysine 230 is modified to N6-acetyllysine. The interacts with polybasic regions in GTPases stretch occupies residues 239–255 (DKREMIFEVLAPLAEND). 3 ARM repeats span residues 347–390 (DANC…NLAI), 391–431 (PVIN…MLID), and 479–519 (SKDV…LIAA). Residues 379–428 (HAALSALRNLAIPVINKAKMLSAGVTEAVLKFLKSEMPPVQFKLLGTLRM) are critical for catalytic activity.

In terms of assembly, interacts with RABL3. Interacts with RHOT1. Interacts with unprenylated RHOA; the interaction is direct. Interacts with RAP1A. Interacts with KRAS. Interacts with RAC1. Interacts with RAP1B. Preferentially interacts with unprenylated GTPases that will become geranylgeranylated. May also interact with prenylated GTPases. As to quaternary structure, interacts with prenylated RHOA; the interaction is direct and in a 1:1 stoichiometry. Interacts with RAP1A. Interacts with KRAS. Interacts with RAC1. Interacts with RAP1B. Preferentially interacts with prenylated GTPases. Post-translationally, forms covalent cross-links mediated by transglutaminase TGM2, between a glutamine and the epsilon-amino group of a lysine residue, forming homopolymers and heteropolymers.

The protein localises to the cytoplasm. Its subcellular location is the cytosol. The protein resides in the endoplasmic reticulum. It localises to the mitochondrion. It is found in the nucleus. Functionally, acts as a GEF (guanine nucleotide exchange factor) for the Rho family of small GTP-binding proteins (G proteins) that stimulates the dissociation of GDP to enable subsequent binding of GTP. Additionally, appears to chaperone the processing and/or trafficking of small GTPases containing a C-terminal polybasic region independently of GEF activity. Targets include RAP1A/RAP1B, RHOA, RHOB, RHOC, RAC1 and KRAS. Regulates mitochondrial dynamics by controlling RHOT function to promote mitochondrial fission during high calcium conditions. Able to promote the Ca(2+) release from the endoplasmic reticulum via both inositol trisphosphate (Ins3P) and ryanodine sensitive receptors leading to a enhanced mitochondrial Ca(2+) uptake. In terms of biological role, acts as a GEF (guanine nucleotide exchange factor) for unprenylated RHOA. Chaperones the entry and passage of small GTPases through the prenylation pathway. Recognizes the last amino acid in the GTPase C-terminal CAAX motif with a preference for 'Leu' over 'Met', indicating involvement in the geranylgeranylation pathway. Its function is as follows. Acts as a GEF (guanine nucleotide exchange factor) for prenylated RHOA. Acts as a GEF for RHOC. Chaperones the downstream trafficking and/or processing of small newly prenylated GTPases. Escorts RAC1 to the nucleus. The protein is Rap1 GTPase-GDP dissociation stimulator 1 of Homo sapiens (Human).